A 441-amino-acid polypeptide reads, in one-letter code: G-protein coupled receptor family C group 5 member C (441 aa).

A signal peptide spans 1–22 (MATHKTLLMCLGLPLFFPGALA). At 23–49 (QNHAPPGCSPDLDPLYYNLCDRSGAWG) the chain is on the extracellular side. Residues 50–70 (IVLEAVAGAGIITTFVLTIIL) form a helical membrane-spanning segment. Residues 71–84 (VASLPFVQDTKKRS) are Cytoplasmic-facing. Residues 85 to 105 (LLGTQVFFLLGTLGLFCLVFA) traverse the membrane as a helical segment. The Extracellular portion of the chain corresponds to 106 to 119 (CVVKPDFSTCASRR). The helical transmembrane segment at 120–140 (FLFGVLFAICFSCLIAHTLSL) threads the bilayer. Residues 141–154 (NFLARKNHGPRGWV) lie on the Cytoplasmic side of the membrane. A helical transmembrane segment spans residues 155–175 (IFTVALLLTLVEVIINTEWLI). The Extracellular segment spans residues 176-207 (ITLVRGGGQVSTPGNGSADWTVTSPCAIANMD). N-linked (GlcNAc...) asparagine glycosylation occurs at asparagine 190. The chain crosses the membrane as a helical span at residues 208-228 (FVMALIYVMLLLLAAFLGAWP). Topologically, residues 229 to 240 (TLCGRFKRWRKH) are cytoplasmic. The chain crosses the membrane as a helical span at residues 241–261 (GVFVLLTTATSIAIWVVWIVM). The Extracellular segment spans residues 262–278 (YTYGNKQHHSPTWDDPT). A helical membrane pass occupies residues 279-299 (LAIALAANAWTFVFFYVIPEV). At 300–441 (SQVTKPSPEQ…DQSPKNKTRW (142 aa)) the chain is on the cytoplasmic side. Phosphoserine is present on residues serine 343, serine 382, serine 402, and serine 405. Residue tyrosine 413 is modified to Phosphotyrosine. The disordered stretch occupies residues 419 to 441 (QVATPTKDGKISQDQSPKNKTRW). Threonine 422 is modified (phosphothreonine). The segment covering 430 to 441 (SQDQSPKNKTRW) has biased composition (polar residues). Residue serine 434 is modified to Phosphoserine.

It belongs to the G-protein coupled receptor 3 family.

It is found in the cell membrane. Functionally, this retinoic acid-inducible G-protein coupled receptor provide evidence for a possible interaction between retinoid and G-protein signaling pathways. The protein is G-protein coupled receptor family C group 5 member C (Gprc5c) of Rattus norvegicus (Rat).